Reading from the N-terminus, the 309-residue chain is Olfactory receptor 8A1 (309 aa).

Residues 1-28 (MTAENQSTVTEFILGGLTNRPELQLPLF) are Extracellular-facing. The chain crosses the membrane as a helical span at residues 29-49 (LLFLGIYVVTMVGNLGMITLI). At 50–56 (GLNSQLH) the chain is on the cytoplasmic side. Residues 57 to 77 (TPMYFFLSNLSLVDLCYSSVI) form a helical membrane-spanning segment. Over 78–90 (TPKMLINFVSQRN) the chain is Extracellular. The helical transmembrane segment at 91 to 111 (LISYVGCMSQLYFFLVFVIAE) threads the bilayer. An intrachain disulfide couples C97 to C188. Topologically, residues 112–133 (CYMLTVMAYDRYVAICQPLLYN) are cytoplasmic. Residues 134–154 (IIMSPALCSLLVAFVYAVGLI) traverse the membrane as a helical segment. The Extracellular segment spans residues 155–195 (GSAIETGLMLKLNYCEDLISHYFCDILPLMKLSCSSTYDVE). Residues 196–216 (MAVFFLAGFDIIVTSLTVLIS) traverse the membrane as a helical segment. Topologically, residues 217–238 (YAFILSSILRISSNEGRSKAFS) are cytoplasmic. The helical transmembrane segment at 239–259 (TCSSHFAAVGLFYGSTAFMYL) threads the bilayer. Residues 260–270 (KPSTASSLAQE) are Extracellular-facing. The chain crosses the membrane as a helical span at residues 271–291 (NVASVFYTTVIPMFNPLIYSL). The Cytoplasmic portion of the chain corresponds to 292-309 (RNKEVKTALDKTLRRKVF).

This sequence belongs to the G-protein coupled receptor 1 family.

The protein resides in the cell membrane. Odorant receptor. The protein is Olfactory receptor 8A1 of Mus musculus (Mouse).